Consider the following 350-residue polypeptide: 4-hydroxythreonine-4-phosphate dehydrogenase (350 aa).

The substrate site is built by histidine 138 and threonine 139. A divalent metal cation contacts are provided by histidine 173, histidine 218, and histidine 273. Positions 281, 290, and 299 each coordinate substrate.

The protein belongs to the PdxA family. Homodimer. Requires Zn(2+) as cofactor. Mg(2+) is required as a cofactor. The cofactor is Co(2+).

Its subcellular location is the cytoplasm. The enzyme catalyses 4-(phosphooxy)-L-threonine + NAD(+) = 3-amino-2-oxopropyl phosphate + CO2 + NADH. It participates in cofactor biosynthesis; pyridoxine 5'-phosphate biosynthesis; pyridoxine 5'-phosphate from D-erythrose 4-phosphate: step 4/5. Catalyzes the NAD(P)-dependent oxidation of 4-(phosphooxy)-L-threonine (HTP) into 2-amino-3-oxo-4-(phosphooxy)butyric acid which spontaneously decarboxylates to form 3-amino-2-oxopropyl phosphate (AHAP). The protein is 4-hydroxythreonine-4-phosphate dehydrogenase of Xanthobacter autotrophicus (strain ATCC BAA-1158 / Py2).